Here is a 350-residue protein sequence, read N- to C-terminus: Solute carrier family 35 member E4 (350 aa).

8 consecutive transmembrane segments (helical) span residues 40 to 60, 79 to 99, 110 to 130, 135 to 155, 218 to 238, 258 to 278, 279 to 299, and 301 to 321; these read VLGQ…LLAG, PLLL…WGAQ, VLLL…GLST, LAQL…ALLL, VTLL…AALV, VLLS…LLAL, TSAL…LILS, and LLFG…TLSG. In terms of domain architecture, EamA spans 125–179; that stretch reads NVGLSTVPLDLAQLATTTTPLFTLALSALLLGRRHHPLQFAAMGPLCLGAACSLA.

The protein belongs to the TPT transporter family. SLC35E subfamily.

The protein localises to the membrane. Functionally, putative transporter. The protein is Solute carrier family 35 member E4 (Slc35e4) of Rattus norvegicus (Rat).